The following is a 389-amino-acid chain: Chalcone synthase 2 (389 aa).

C164 is an active-site residue.

It belongs to the thiolase-like superfamily. Chalcone/stilbene synthases family.

It carries out the reaction (E)-4-coumaroyl-CoA + 3 malonyl-CoA + 3 H(+) = 2',4,4',6'-tetrahydroxychalcone + 3 CO2 + 4 CoA. It functions in the pathway secondary metabolite biosynthesis; flavonoid biosynthesis. The primary product of this enzyme is 4,2',4',6'-tetrahydroxychalcone (also termed naringenin-chalcone or chalcone) which can under specific conditions spontaneously isomerize into naringenin. The protein is Chalcone synthase 2 (CHS2) of Pisum sativum (Garden pea).